A 236-amino-acid chain; its full sequence is Ribose-5-phosphate isomerase A (236 aa).

Residues 31–34 (TGST), 84–87 (DGAD), and 97–100 (KGGG) each bind substrate. Glutamate 106 acts as the Proton acceptor in catalysis. Lysine 124 lines the substrate pocket.

This sequence belongs to the ribose 5-phosphate isomerase family. In terms of assembly, homodimer.

It carries out the reaction aldehydo-D-ribose 5-phosphate = D-ribulose 5-phosphate. The protein operates within carbohydrate degradation; pentose phosphate pathway; D-ribose 5-phosphate from D-ribulose 5-phosphate (non-oxidative stage): step 1/1. Functionally, catalyzes the reversible conversion of ribose-5-phosphate to ribulose 5-phosphate. The protein is Ribose-5-phosphate isomerase A of Polynucleobacter asymbioticus (strain DSM 18221 / CIP 109841 / QLW-P1DMWA-1) (Polynucleobacter necessarius subsp. asymbioticus).